The chain runs to 380 residues: MASLRKTHPLLKIVNDALVDLPTPINISTWWNFGSLLGLCLIAQILTGLFLAMHYTADIATAFSSVAHICRDVNYGWLIRNFHANGASFFFICLYLHVGRGLYYGSYLYKETWNIGVVLLLLVMMTAFVGYVLPWGQMSFWGATVITNLLSAVPYVGNTLVQWIWGGFSVDNATLTRFFAFHFLFPFIIAAMVILHLLFLHETGSSNPTGISSNADKIPFHPYFTYKDLFGFVILLLALSVLALFSPNLLGDPDNFIPANPLVTPPHIKPEWYFLFAYAILRSIPNKLGGVLALLASILILMVVPLLHTSKQRGLMFRPLTQILFWTLVADVAILTWIGGMPVEHPFITVGQVASVLYFALFLIFIPATGWAENKALKWN.

A run of 4 helical transmembrane segments spans residues 33–53 (FGSL…FLAM), 77–98 (WLIR…YLHV), 113–133 (WNIG…GYVL), and 178–198 (FFAF…LHLL). Histidine 83 and histidine 97 together coordinate heme b. The heme b site is built by histidine 182 and histidine 196. Histidine 201 serves as a coordination point for a ubiquinone. 4 helical membrane-spanning segments follow: residues 226-246 (YKDL…ALFS), 288-308 (LGGV…PLLH), 320-340 (LTQI…WIGG), and 347-367 (FITV…IFIP).

This sequence belongs to the cytochrome b family. As to quaternary structure, the cytochrome bc1 complex contains 3 respiratory subunits (MT-CYB, CYC1 and UQCRFS1), 2 core proteins (UQCRC1 and UQCRC2) and probably 6 low-molecular weight proteins. The cofactor is heme b.

Its subcellular location is the mitochondrion inner membrane. Component of the ubiquinol-cytochrome c reductase complex (complex III or cytochrome b-c1 complex) that is part of the mitochondrial respiratory chain. The b-c1 complex mediates electron transfer from ubiquinol to cytochrome c. Contributes to the generation of a proton gradient across the mitochondrial membrane that is then used for ATP synthesis. This chain is Cytochrome b (mt-cyb), found in Neocyttus rhomboidalis (Spiky oreo dory).